The chain runs to 338 residues: Lipoate-protein ligase A (338 aa).

The 188-residue stretch at Pro-29–Val-216 folds into the BPL/LPL catalytic domain. Residues Arg-71, Gly-76–Phe-79, and Lys-134 contribute to the ATP site. Lys-134 is a binding site for (R)-lipoate.

The protein belongs to the LplA family. As to quaternary structure, monomer.

It is found in the cytoplasm. The catalysed reaction is L-lysyl-[lipoyl-carrier protein] + (R)-lipoate + ATP = N(6)-[(R)-lipoyl]-L-lysyl-[lipoyl-carrier protein] + AMP + diphosphate + H(+). Its pathway is protein modification; protein lipoylation via exogenous pathway; protein N(6)-(lipoyl)lysine from lipoate: step 1/2. It participates in protein modification; protein lipoylation via exogenous pathway; protein N(6)-(lipoyl)lysine from lipoate: step 2/2. Functionally, catalyzes both the ATP-dependent activation of exogenously supplied lipoate to lipoyl-AMP and the transfer of the activated lipoyl onto the lipoyl domains of lipoate-dependent enzymes. This chain is Lipoate-protein ligase A, found in Escherichia coli O17:K52:H18 (strain UMN026 / ExPEC).